We begin with the raw amino-acid sequence, 487 residues long: N-succinylglutamate 5-semialdehyde dehydrogenase (487 aa).

Position 221–226 (221–226) interacts with NAD(+); that stretch reads GSSDTG. Catalysis depends on residues Glu244 and Cys278.

This sequence belongs to the aldehyde dehydrogenase family. AstD subfamily.

The catalysed reaction is N-succinyl-L-glutamate 5-semialdehyde + NAD(+) + H2O = N-succinyl-L-glutamate + NADH + 2 H(+). It participates in amino-acid degradation; L-arginine degradation via AST pathway; L-glutamate and succinate from L-arginine: step 4/5. In terms of biological role, catalyzes the NAD-dependent reduction of succinylglutamate semialdehyde into succinylglutamate. This chain is N-succinylglutamate 5-semialdehyde dehydrogenase, found in Burkholderia cenocepacia (strain ATCC BAA-245 / DSM 16553 / LMG 16656 / NCTC 13227 / J2315 / CF5610) (Burkholderia cepacia (strain J2315)).